The following is a 279-amino-acid chain: NLP effector protein 9 (279 aa).

Positions 1–19 (MKISNLLGVLVVFLAVVKG) are cleaved as a signal peptide. A Conserved undecapeptide motif motif is present at residues 151–161 (AIMYAWYFPDI). The N-linked (GlcNAc...) asparagine glycan is linked to N176.

The protein belongs to the Necrosis inducing protein (NPP1) family.

The protein localises to the secreted. In terms of biological role, secreted effector that acts as a pathogen-associated molecular pattern (PAMP) recognized by the plant immune system. Seems not to induce necrosis in Nicotiana benthamiana leaves. This is NLP effector protein 9 from Plasmopara viticola (Downy mildew of grapevine).